The primary structure comprises 738 residues: Eukaryotic translation initiation factor 3 subunit B (738 aa).

Residues 1 to 10 are compositionally biased toward polar residues; that stretch reads MAPSFENLSE. The interval 1–20 is disordered; sequence MAPSFENLSEQDLHEEEEEE. The 87-residue stretch at 40 to 126 folds into the RRM domain; it reads TFVVIDGLPV…HTLLVNKLMD (87 aa). WD repeat units follow at residues 193-230, 232-289, 301-342, 454-494, 511-554, and 569-607; these read AHWTQLFVQWSPKGTYLASVHPQGVQLWGGPTFSKQKQ, PHPF…RSFV, QPKK…LLGK, SLKD…SFFA, IEKK…EKND, and VDHYGVTDIEWDPTGRYVVSGASAWTHQMENGFNLHTFS. Residues 693-720 are disordered; the sequence is EAYGLPEEADQPKAAKDAPTNTEDKGET. A compositionally biased stretch (basic and acidic residues) spans 702-720; that stretch reads DQPKAAKDAPTNTEDKGET.

Belongs to the eIF-3 subunit B family. In terms of assembly, component of the eukaryotic translation initiation factor 3 (eIF-3) complex.

It localises to the cytoplasm. Its function is as follows. RNA-binding component of the eukaryotic translation initiation factor 3 (eIF-3) complex, which is involved in protein synthesis of a specialized repertoire of mRNAs and, together with other initiation factors, stimulates binding of mRNA and methionyl-tRNAi to the 40S ribosome. The eIF-3 complex specifically targets and initiates translation of a subset of mRNAs involved in cell proliferation. This chain is Eukaryotic translation initiation factor 3 subunit B (prt1), found in Emericella nidulans (strain FGSC A4 / ATCC 38163 / CBS 112.46 / NRRL 194 / M139) (Aspergillus nidulans).